We begin with the raw amino-acid sequence, 629 residues long: Phosphomethylpyrimidine synthase (629 aa).

Residues 1-24 form a disordered region; the sequence is MSTKPKNAAHLSESAQVDSGSVQP. The segment covering 13–24 has biased composition (polar residues); that stretch reads ESAQVDSGSVQP. Substrate is bound by residues asparagine 233, methionine 262, tyrosine 291, histidine 327, 347 to 349, 388 to 391, and glutamate 427; these read SRG and DGLR. Residue histidine 431 coordinates Zn(2+). Tyrosine 454 serves as a coordination point for substrate. Histidine 495 provides a ligand contact to Zn(2+). [4Fe-4S] cluster is bound by residues cysteine 575, cysteine 578, and cysteine 583.

It belongs to the ThiC family. In terms of assembly, homodimer. It depends on [4Fe-4S] cluster as a cofactor.

It catalyses the reaction 5-amino-1-(5-phospho-beta-D-ribosyl)imidazole + S-adenosyl-L-methionine = 4-amino-2-methyl-5-(phosphooxymethyl)pyrimidine + CO + 5'-deoxyadenosine + formate + L-methionine + 3 H(+). It participates in cofactor biosynthesis; thiamine diphosphate biosynthesis. In terms of biological role, catalyzes the synthesis of the hydroxymethylpyrimidine phosphate (HMP-P) moiety of thiamine from aminoimidazole ribotide (AIR) in a radical S-adenosyl-L-methionine (SAM)-dependent reaction. The protein is Phosphomethylpyrimidine synthase of Pseudomonas syringae pv. tomato (strain ATCC BAA-871 / DC3000).